Reading from the N-terminus, the 633-residue chain is Phosphomethylpyrimidine synthase (633 aa).

Polar residues predominate over residues 1–13 (MNIRSNPDTTLPA). Residues 1–22 (MNIRSNPDTTLPAVTTGPLPSS) form a disordered region. Residues N221, M250, Y279, H315, 335-337 (SRG), 376-379 (DGLR), and E415 contribute to the substrate site. Residue H419 coordinates Zn(2+). Y442 is a substrate binding site. Residue H483 participates in Zn(2+) binding. [4Fe-4S] cluster-binding residues include C563, C566, and C571.

This sequence belongs to the ThiC family. Homodimer. [4Fe-4S] cluster is required as a cofactor.

The catalysed reaction is 5-amino-1-(5-phospho-beta-D-ribosyl)imidazole + S-adenosyl-L-methionine = 4-amino-2-methyl-5-(phosphooxymethyl)pyrimidine + CO + 5'-deoxyadenosine + formate + L-methionine + 3 H(+). It functions in the pathway cofactor biosynthesis; thiamine diphosphate biosynthesis. Its function is as follows. Catalyzes the synthesis of the hydroxymethylpyrimidine phosphate (HMP-P) moiety of thiamine from aminoimidazole ribotide (AIR) in a radical S-adenosyl-L-methionine (SAM)-dependent reaction. This chain is Phosphomethylpyrimidine synthase, found in Bradyrhizobium sp. (strain BTAi1 / ATCC BAA-1182).